The primary structure comprises 39 residues: Metallocarboxypeptidase inhibitor (39 aa).

Q1 carries the post-translational modification Pyrrolidone carboxylic acid. 3 disulfides stabilise this stretch: C8–C24, C12–C27, and C18–C34.

As to expression, highly concentrated in tubers. Closely related but distinct forms of MCPI are present in leaves, stems and buds.

Its function is as follows. May play a defensive role against insect attacks. Inhibits A.aegypti carboxypeptidase CPB1. In Solanum tuberosum (Potato), this protein is Metallocarboxypeptidase inhibitor.